Reading from the N-terminus, the 206-residue chain is AT-hook motif nuclear-localized protein 28 (206 aa).

Disordered regions lie at residues 1–21 (METV…PKAP) and 160–206 (TEEE…PSPY). The a.T hook DNA-binding region spans 5-17 (GRPRGRPRGSKNK). Residues 7–18 (PRGRPRGSKNKP) show a composition bias toward basic residues. Residues 27 to 173 (DPPMSPYILE…QRNSAEGEEE (147 aa)) form the PPC domain.

The protein resides in the nucleus. Its function is as follows. Transcription factor that specifically binds AT-rich DNA sequences related to the nuclear matrix attachment regions (MARs). This Arabidopsis thaliana (Mouse-ear cress) protein is AT-hook motif nuclear-localized protein 28.